The sequence spans 110 residues: Small ribosomal subunit protein bS16 (110 aa).

The segment covering 82-103 has biased composition (basic and acidic residues); it reads VKKREARNNPEKAVPRKERKAQ. Positions 82–110 are disordered; the sequence is VKKREARNNPEKAVPRKERKAQAEAAAKG.

It belongs to the bacterial ribosomal protein bS16 family.

This chain is Small ribosomal subunit protein bS16, found in Bradyrhizobium sp. (strain ORS 278).